A 94-amino-acid polypeptide reads, in one-letter code: Phosphoribosyl-ATP pyrophosphatase (94 aa).

The protein belongs to the PRA-PH family.

It localises to the cytoplasm. It catalyses the reaction 1-(5-phospho-beta-D-ribosyl)-ATP + H2O = 1-(5-phospho-beta-D-ribosyl)-5'-AMP + diphosphate + H(+). It functions in the pathway amino-acid biosynthesis; L-histidine biosynthesis; L-histidine from 5-phospho-alpha-D-ribose 1-diphosphate: step 2/9. This Pyrobaculum calidifontis (strain DSM 21063 / JCM 11548 / VA1) protein is Phosphoribosyl-ATP pyrophosphatase.